A 477-amino-acid chain; its full sequence is MASGPEDPILERYFKGHKAAITSADFSPNCKQIATASWDTFLMLWSLKPHARAYRYVGHKDVVTSLQFSPQGNLLASASRDKTVRLWVLDRKGKSSEFKAHTAPVRSVDFSADGQFLVTASEDKSIKVWSMYRQRFLYSLYRHTHWVRCAKFSPDGRLIVSCSEDKTIKIWDTTSKQCVNNFSDSVGFANFVDFSPNGTCIASAGSDHAVRIWDIRMNRLLQHYQVHSCGVNCLSFHPSGNSLVTASSDGTVKILDLVEGRLIYTLQGHTGPVFTVSFSKDGELFTSGGADAQVLVWRTSFNQVHYRDPSKRNLKRLHLEASPHLLDIYPRTPHGHEDKRETIEINPKLEVMDLHSSSPPVVDVLSFDSTTVTDSTCRAVPGKGEDICRYFLNPLLMPECSSTIMKKKPEDVGDPPSENQRSVPLAVADALEHIMEQLNILTQSVSIVEQRLSLTEDKLKDCLENQQKLFSVIQQKS.

7 WD repeats span residues 16-55 (GHKA…RAYR), 58-97 (GHKD…KSSE), 100-139 (AHTA…FLYS), 142-181 (RHTH…CVNN), 183-223 (SDSV…LLQH), 226-265 (VHSC…LIYT), and 268-307 (GHTG…VHYR). A coiled-coil region spans residues 449–469 (EQRLSLTEDKLKDCLENQQKL).

The protein belongs to the WD repeat POC1 family. In terms of assembly, interacts with POC1A. Interacts with FAM161A. Interacts with CEP44; the interaction is direct and recruits POC1B to centriolar microtubules. Forms a microtubule-associated complex with POC5, CETN2 and FAM161A. Interacts with CCDC15. In terms of processing, phosphorylated in mitotic cells that may be mediated by CDK1.

The protein localises to the cytoplasm. The protein resides in the cytoskeleton. It is found in the microtubule organizing center. It localises to the centrosome. Its subcellular location is the centriole. The protein localises to the cilium basal body. The protein resides in the spindle pole. Plays an important role in centriole assembly and/or stability and ciliogenesis. Involved in early steps of centriole duplication, as well as in the later steps of centriole length control. Acts in concert with POC1A to ensure centriole integrity and proper mitotic spindle formation. Required for primary cilia formation, ciliary length and also cell proliferation. Required for retinal integrity. Acts as a positive regulator of centriole elongation. This chain is POC1 centriolar protein homolog B (Poc1b), found in Rattus norvegicus (Rat).